A 190-amino-acid chain; its full sequence is Probable nicotinate-nucleotide adenylyltransferase (190 aa).

This sequence belongs to the NadD family.

It carries out the reaction nicotinate beta-D-ribonucleotide + ATP + H(+) = deamido-NAD(+) + diphosphate. It participates in cofactor biosynthesis; NAD(+) biosynthesis; deamido-NAD(+) from nicotinate D-ribonucleotide: step 1/1. In terms of biological role, catalyzes the reversible adenylation of nicotinate mononucleotide (NaMN) to nicotinic acid adenine dinucleotide (NaAD). In Myxococcus xanthus (strain DK1622), this protein is Probable nicotinate-nucleotide adenylyltransferase.